Reading from the N-terminus, the 163-residue chain is Nucleotide-binding protein YajQ (163 aa).

It belongs to the YajQ family.

In terms of biological role, nucleotide-binding protein. This chain is Nucleotide-binding protein YajQ, found in Salmonella paratyphi A (strain ATCC 9150 / SARB42).